Consider the following 430-residue polypeptide: Adenylosuccinate synthetase (430 aa).

Residues 12-18 (GDEGKGK) and 40-42 (GHT) each bind GTP. Residue Asp-13 is the Proton acceptor of the active site. Residues Asp-13 and Gly-40 each contribute to the Mg(2+) site. IMP is bound by residues 13–16 (DEGK), 38–41 (NAGH), Thr-128, Arg-142, Gln-223, Thr-238, and Arg-302. Catalysis depends on His-41, which acts as the Proton donor. A substrate-binding site is contributed by 298-304 (TTTGRPR). Residues Arg-304, 330 to 332 (CID), and 412 to 414 (SVG) each bind GTP.

It belongs to the adenylosuccinate synthetase family. In terms of assembly, homodimer. Requires Mg(2+) as cofactor.

It localises to the cytoplasm. The catalysed reaction is IMP + L-aspartate + GTP = N(6)-(1,2-dicarboxyethyl)-AMP + GDP + phosphate + 2 H(+). The protein operates within purine metabolism; AMP biosynthesis via de novo pathway; AMP from IMP: step 1/2. Functionally, plays an important role in the de novo pathway of purine nucleotide biosynthesis. Catalyzes the first committed step in the biosynthesis of AMP from IMP. The protein is Adenylosuccinate synthetase of Streptococcus thermophilus (strain CNRZ 1066).